We begin with the raw amino-acid sequence, 172 residues long: Transcription factor E (172 aa).

An HTH TFE/IIEalpha-type domain is found at 8–90; the sequence is DDPVVQKYLH…LWTFQYENVP (83 aa).

The protein belongs to the TFE family. Monomer. Interaction with RNA polymerase subunits RpoF and RpoE is necessary for Tfe stimulatory transcription activity. Able to interact with Tbp and RNA polymerase in the absence of DNA promoter. Interacts both with the preinitiation and elongation complexes.

Functionally, transcription factor that plays a role in the activation of archaeal genes transcribed by RNA polymerase. Facilitates transcription initiation by enhancing TATA-box recognition by TATA-box-binding protein (Tbp), and transcription factor B (Tfb) and RNA polymerase recruitment. Not absolutely required for transcription in vitro, but particularly important in cases where Tbp or Tfb function is not optimal. It dynamically alters the nucleic acid-binding properties of RNA polymerases by stabilizing the initiation complex and destabilizing elongation complexes. Seems to translocate with the RNA polymerase following initiation and acts by binding to the non template strand of the transcription bubble in elongation complexes. The sequence is that of Transcription factor E from Halobacterium salinarum (strain ATCC 700922 / JCM 11081 / NRC-1) (Halobacterium halobium).